A 227-amino-acid polypeptide reads, in one-letter code: Cytochrome c oxidase subunit 2 (227 aa).

The Mitochondrial intermembrane segment spans residues 1–14 (MAYPFQLGLQDATS). The chain crosses the membrane as a helical span at residues 15-45 (PIMEELMNFHDHTLMIVFLISSLVLYIISLM). Over 46 to 59 (LTTKLTHTSTMDAQ) the chain is Mitochondrial matrix. The chain crosses the membrane as a helical span at residues 60-87 (EVETIWTILPAAILILIALPSLRILYMM). Topologically, residues 88–227 (DEINNPALTV…YFENWSASMI (140 aa)) are mitochondrial intermembrane. 6 residues coordinate Cu cation: histidine 161, cysteine 196, glutamate 198, cysteine 200, histidine 204, and methionine 207. Glutamate 198 lines the Mg(2+) pocket. Tyrosine 218 carries the post-translational modification Phosphotyrosine.

It belongs to the cytochrome c oxidase subunit 2 family. As to quaternary structure, component of the cytochrome c oxidase (complex IV, CIV), a multisubunit enzyme composed of 14 subunits. The complex is composed of a catalytic core of 3 subunits MT-CO1, MT-CO2 and MT-CO3, encoded in the mitochondrial DNA, and 11 supernumerary subunits COX4I, COX5A, COX5B, COX6A, COX6B, COX6C, COX7A, COX7B, COX7C, COX8 and NDUFA4, which are encoded in the nuclear genome. The complex exists as a monomer or a dimer and forms supercomplexes (SCs) in the inner mitochondrial membrane with NADH-ubiquinone oxidoreductase (complex I, CI) and ubiquinol-cytochrome c oxidoreductase (cytochrome b-c1 complex, complex III, CIII), resulting in different assemblies (supercomplex SCI(1)III(2)IV(1) and megacomplex MCI(2)III(2)IV(2)). Found in a complex with TMEM177, COA6, COX18, COX20, SCO1 and SCO2. Interacts with TMEM177 in a COX20-dependent manner. Interacts with COX20. Interacts with COX16. Cu cation is required as a cofactor.

The protein resides in the mitochondrion inner membrane. The enzyme catalyses 4 Fe(II)-[cytochrome c] + O2 + 8 H(+)(in) = 4 Fe(III)-[cytochrome c] + 2 H2O + 4 H(+)(out). Component of the cytochrome c oxidase, the last enzyme in the mitochondrial electron transport chain which drives oxidative phosphorylation. The respiratory chain contains 3 multisubunit complexes succinate dehydrogenase (complex II, CII), ubiquinol-cytochrome c oxidoreductase (cytochrome b-c1 complex, complex III, CIII) and cytochrome c oxidase (complex IV, CIV), that cooperate to transfer electrons derived from NADH and succinate to molecular oxygen, creating an electrochemical gradient over the inner membrane that drives transmembrane transport and the ATP synthase. Cytochrome c oxidase is the component of the respiratory chain that catalyzes the reduction of oxygen to water. Electrons originating from reduced cytochrome c in the intermembrane space (IMS) are transferred via the dinuclear copper A center (CU(A)) of subunit 2 and heme A of subunit 1 to the active site in subunit 1, a binuclear center (BNC) formed by heme A3 and copper B (CU(B)). The BNC reduces molecular oxygen to 2 water molecules using 4 electrons from cytochrome c in the IMS and 4 protons from the mitochondrial matrix. This is Cytochrome c oxidase subunit 2 (MT-CO2) from Lemniscomys barbarus (Barbary striped grass mouse).